The chain runs to 953 residues: Coiled-coil domain-containing protein 14 (953 aa).

Positions 1–21 are enriched in basic residues; that stretch reads MKRGIRRDPFRKRKLGGRAKK. Disordered stretches follow at residues 1-22 and 52-72; these read MKRGIRRDPFRKRKLGGRAKKV and SGARPGQVLSSGRHTGPAKLT. Phosphoserine is present on S124. Disordered regions lie at residues 126–189 and 268–287; these read SETA…TSDL and PPCPPKVHSEVQTDGNSQFA. Over residues 145–154 the composition is skewed to basic residues; that stretch reads YGSKKKRHEK. The segment covering 169–187 has biased composition (basic and acidic residues); sequence DNKKQIPNEASARSERDTS. The segment covering 277–287 has biased composition (polar residues); it reads EVQTDGNSQFA. Coiled-coil stretches lie at residues 383–413 and 483–618; these read LATNEEKCAREQIREATSERKDLNIHVRDTK and AMQP…AEKE. A phosphoserine mark is found at S670, S754, and S798.

In terms of assembly, interacts with CEP63.

Its subcellular location is the cytoplasm. The protein resides in the cytoskeleton. It localises to the microtubule organizing center. The protein localises to the centrosome. It is found in the centriolar satellite. Its function is as follows. Negatively regulates centriole duplication. Negatively regulates CEP63 and CDK2 centrosomal localization. This is Coiled-coil domain-containing protein 14 (CCDC14) from Homo sapiens (Human).